Reading from the N-terminus, the 346-residue chain is Phenylalanine--tRNA ligase alpha subunit (346 aa).

Glu258 serves as a coordination point for Mg(2+).

It belongs to the class-II aminoacyl-tRNA synthetase family. Phe-tRNA synthetase alpha subunit type 1 subfamily. As to quaternary structure, tetramer of two alpha and two beta subunits. Mg(2+) serves as cofactor.

The protein resides in the cytoplasm. It catalyses the reaction tRNA(Phe) + L-phenylalanine + ATP = L-phenylalanyl-tRNA(Phe) + AMP + diphosphate + H(+). The polypeptide is Phenylalanine--tRNA ligase alpha subunit (Protochlamydia amoebophila (strain UWE25)).